Consider the following 106-residue polypeptide: UPF0145 protein Tpet_0165 (106 aa).

The protein belongs to the UPF0145 family.

This is UPF0145 protein Tpet_0165 from Thermotoga petrophila (strain ATCC BAA-488 / DSM 13995 / JCM 10881 / RKU-1).